We begin with the raw amino-acid sequence, 453 residues long: Protein LOW PSII ACCUMULATION 1, chloroplastic (453 aa).

Residues 1-92 (MAVATAPSLN…LDLFKRGRVK (92 aa)) constitute a chloroplast transit peptide. TPR repeat units lie at residues 75 to 108 (AELC…APNP) and 112 to 145 (QAAY…YNLK). The next 2 helical transmembrane spans lie at 202-222 (FFYF…VPRL) and 238-258 (TTGN…LFLW).

As to quaternary structure, interacts with psbA, but not with psbD, petB, ALB3, LPA2 or LPA3. Is not a component of the PSII complex.

The protein localises to the plastid. The protein resides in the chloroplast thylakoid membrane. In terms of biological role, chaperone required for efficient photosystem II (PSII) assembly. Binds to psbA during de novo biogenesis of PSII. This chain is Protein LOW PSII ACCUMULATION 1, chloroplastic (LPA1), found in Arabidopsis thaliana (Mouse-ear cress).